Consider the following 558-residue polypeptide: Undecaprenyl phosphate-alpha-4-amino-4-deoxy-L-arabinose arabinosyl transferase 1 (558 aa).

12 consecutive transmembrane segments (helical) span residues 4–24 (GAGL…LVPL), 87–107 (FASV…SWTV), 115–135 (LLAA…TYSV), 136–156 (LDPM…FALR), 178–198 (FMTK…PVAL), 207–227 (LGYG…WALA), 257–277 (APFW…LGLL), 295–315 (FLLL…KGKL), 316–336 (LTYI…YGRE), 355–375 (AFAL…LPWA), 383–403 (WPRI…AAVS), and 411–431 (WALA…IIPQ).

The protein belongs to the glycosyltransferase 83 family.

The protein resides in the cell inner membrane. It carries out the reaction 4-amino-4-deoxy-alpha-L-arabinopyranosyl di-trans,octa-cis-undecaprenyl phosphate + lipid IVA = lipid IIA + di-trans,octa-cis-undecaprenyl phosphate.. The protein operates within lipopolysaccharide metabolism; 4-amino-4-deoxy-beta-L-arabinose-lipid A biosynthesis. Its function is as follows. Catalyzes the transfer of the L-Ara4N moiety of the glycolipid undecaprenyl phosphate-alpha-L-Ara4N to lipid A. The modified arabinose is attached to lipid A and is required for resistance to polymyxin and cationic antimicrobial peptides. The chain is Undecaprenyl phosphate-alpha-4-amino-4-deoxy-L-arabinose arabinosyl transferase 1 from Sodalis glossinidius (strain morsitans).